The sequence spans 211 residues: Ribosomal RNA large subunit methyltransferase E (211 aa).

S-adenosyl-L-methionine-binding residues include glycine 55, tryptophan 57, aspartate 75, aspartate 93, and aspartate 117. The active-site Proton acceptor is lysine 157.

Belongs to the class I-like SAM-binding methyltransferase superfamily. RNA methyltransferase RlmE family.

It localises to the cytoplasm. It carries out the reaction uridine(2552) in 23S rRNA + S-adenosyl-L-methionine = 2'-O-methyluridine(2552) in 23S rRNA + S-adenosyl-L-homocysteine + H(+). Specifically methylates the uridine in position 2552 of 23S rRNA at the 2'-O position of the ribose in the fully assembled 50S ribosomal subunit. The chain is Ribosomal RNA large subunit methyltransferase E from Methanothermobacter thermautotrophicus (strain ATCC 29096 / DSM 1053 / JCM 10044 / NBRC 100330 / Delta H) (Methanobacterium thermoautotrophicum).